The primary structure comprises 499 residues: Serine/threonine-protein kinase RHS3 (499 aa).

The disordered stretch occupies residues 1–92; sequence MLLKPGNKLV…NSSKPHTGGD (92 aa). Positions 39 to 55 are enriched in basic and acidic residues; that stretch reads QKQVEQNTKKIEEHQIK. Residues 63–85 are compositionally biased toward low complexity; the sequence is SNHNVNMSSQSNNSESTSTNNSS. A Protein kinase domain is found at 113-436; sequence FRVLKRLGYG…ATEIKQHPFF (324 aa). Residues 119–127 and lysine 144 contribute to the ATP site; that span reads LGYGDIGSV. Aspartate 240 acts as the Proton acceptor in catalysis. Positions 437 to 499 constitute an AGC-kinase C-terminal domain; that stretch reads EGVNWALIRG…DPDYIVFEYF (63 aa).

The protein belongs to the protein kinase superfamily. AGC Ser/Thr protein kinase family. As to quaternary structure, interacts with PDPK1/PDK1. In terms of processing, autophosphorylated and phosphorylated by PDPK1/PDK1. As to expression, specifically expressed in root hair cells.

It catalyses the reaction L-seryl-[protein] + ATP = O-phospho-L-seryl-[protein] + ADP + H(+). The enzyme catalyses L-threonyl-[protein] + ATP = O-phospho-L-threonyl-[protein] + ADP + H(+). Activated by PDPK1/PDK1. In terms of biological role, involved in root hair growth and morphogenesis. The sequence is that of Serine/threonine-protein kinase RHS3 from Arabidopsis thaliana (Mouse-ear cress).